The sequence spans 459 residues: Glutathione reductase (459 aa).

FAD is bound by residues S14, G15, E34, T41, C42, K50, and A114. S14 contacts glutathione. C42 and C47 form a disulfide bridge. 5 residues coordinate NADP(+): I177, E180, R197, K203, and G262. FAD contacts are provided by D313 and T321. R329 contacts glutathione. NADP(+) is bound at residue A351. Position 448 (H448) interacts with FAD. The active-site Proton acceptor is the H448.

This sequence belongs to the class-I pyridine nucleotide-disulfide oxidoreductase family. Homodimer. FAD serves as cofactor.

It localises to the cytoplasm. The catalysed reaction is 2 glutathione + NADP(+) = glutathione disulfide + NADPH + H(+). In terms of biological role, catalyzes the reduction of glutathione disulfide (GSSG) to reduced glutathione (GSH). Constitutes the major mechanism to maintain a high GSH:GSSG ratio in the cytosol. In Nostoc sp. (strain PCC 7120 / SAG 25.82 / UTEX 2576), this protein is Glutathione reductase (gor).